A 269-amino-acid chain; its full sequence is tRNA uridine(34) hydroxylase (269 aa).

The 95-residue stretch at 122–216 (QDPEVVLIDV…YLEAIAPEEN (95 aa)) folds into the Rhodanese domain. The active-site Cysteine persulfide intermediate is cysteine 176.

This sequence belongs to the TrhO family.

It carries out the reaction uridine(34) in tRNA + AH2 + O2 = 5-hydroxyuridine(34) in tRNA + A + H2O. In terms of biological role, catalyzes oxygen-dependent 5-hydroxyuridine (ho5U) modification at position 34 in tRNAs. This Synechococcus elongatus (strain ATCC 33912 / PCC 7942 / FACHB-805) (Anacystis nidulans R2) protein is tRNA uridine(34) hydroxylase.